The chain runs to 742 residues: Phosphoribosylformylglycinamidine synthase subunit PurL (742 aa).

His54 is an active-site residue. 2 residues coordinate ATP: Tyr57 and Lys96. Glu98 provides a ligand contact to Mg(2+). Substrate is bound by residues 99 to 102 (SHNH) and Arg121. The active-site Proton acceptor is the His100. Mg(2+) is bound at residue Asp122. Residue Gln245 participates in substrate binding. Asp273 contacts Mg(2+). 317–319 (ESQ) lines the substrate pocket. The ATP site is built by Asp500 and Gly537. A Mg(2+)-binding site is contributed by Asn538. Position 540 (Ser540) interacts with substrate.

It belongs to the FGAMS family. As to quaternary structure, monomer. Part of the FGAM synthase complex composed of 1 PurL, 1 PurQ and 2 PurS subunits.

It is found in the cytoplasm. It carries out the reaction N(2)-formyl-N(1)-(5-phospho-beta-D-ribosyl)glycinamide + L-glutamine + ATP + H2O = 2-formamido-N(1)-(5-O-phospho-beta-D-ribosyl)acetamidine + L-glutamate + ADP + phosphate + H(+). It participates in purine metabolism; IMP biosynthesis via de novo pathway; 5-amino-1-(5-phospho-D-ribosyl)imidazole from N(2)-formyl-N(1)-(5-phospho-D-ribosyl)glycinamide: step 1/2. Its function is as follows. Part of the phosphoribosylformylglycinamidine synthase complex involved in the purines biosynthetic pathway. Catalyzes the ATP-dependent conversion of formylglycinamide ribonucleotide (FGAR) and glutamine to yield formylglycinamidine ribonucleotide (FGAM) and glutamate. The FGAM synthase complex is composed of three subunits. PurQ produces an ammonia molecule by converting glutamine to glutamate. PurL transfers the ammonia molecule to FGAR to form FGAM in an ATP-dependent manner. PurS interacts with PurQ and PurL and is thought to assist in the transfer of the ammonia molecule from PurQ to PurL. The chain is Phosphoribosylformylglycinamidine synthase subunit PurL from Geobacillus kaustophilus (strain HTA426).